A 716-amino-acid polypeptide reads, in one-letter code: MTVQLSDEAYAVVEGRHADPFRYLGAHPEDGGTMVRVLLPDAVAVEVIGDNGDVAPLDQAHPAGLFVGPLPGASPRYTLRARFGDTTVELQDPYRFPPILSDFDLYLLGEGTDQRLYDKLGAHPMELEGVAGVGFVVLAPNARRVSVVGDFNFWNPLRHQMRVRGSGYWELFVPGARAGDHYKFDLAGPNGEQLPQKADPLAFAAELRPKTASIVVDATTLPRPRPAPENINALSAPMSIYEVHLGSWRRKEGDQWLTYRELAEQLPAYVRDMGFTHVEFLPVSEHPFDGSWGYQPTGLYAPTSRFGSPEDFCALVDACHAAGIGVILDWVPGHFPDDPHGLGNFDGTALYEHANPMQGRHLDWGTLIYNYGRTEVVNFLTANALFWLERYGIDGLRVDAVASMLYLDYSRPAGGWIPNKFGGRENIEAIDFIRRFNTEVYGKFPHSTTAAEESTAWPQVSRPIEFGGLGFGYKWNMGWMHDTLNYISKDPIHRKYHHGQILFGLHYAFSENFILPLSHDEVVHGKRSILGRMPGDEWQRFANLRAYYAFMFGHPGKKLLFMGSEFGQEREWSHDRSLDWHLLEYPKYSGIQALLRDLNKLYRSLPALHQLDCDPFGFEWLITEDANRNLFAWMRKGNDTRARCLVIVNFSPNVYQDYRVRVPFPGRWREVFNSDSAGYGGTNVGNGGEVRTLEGLVPELSLTIPPLAAIFLTPED.

Asp-399 acts as the Nucleophile in catalysis. The active-site Proton donor is Glu-452.

The protein belongs to the glycosyl hydrolase 13 family. GlgB subfamily. As to quaternary structure, monomer.

The catalysed reaction is Transfers a segment of a (1-&gt;4)-alpha-D-glucan chain to a primary hydroxy group in a similar glucan chain.. The protein operates within glycan biosynthesis; glycogen biosynthesis. Functionally, catalyzes the formation of the alpha-1,6-glucosidic linkages in glycogen by scission of a 1,4-alpha-linked oligosaccharide from growing alpha-1,4-glucan chains and the subsequent attachment of the oligosaccharide to the alpha-1,6 position. In Rhodopseudomonas palustris (strain ATCC BAA-98 / CGA009), this protein is 1,4-alpha-glucan branching enzyme GlgB.